The primary structure comprises 462 residues: Annexin A7 (462 aa).

The segment at 1 to 130 is disordered; it reads MSYPPNQGYP…QGYPPQQGYP (130 aa). The interval 7-131 is 19 X 6 AA tandem repeats of Q-G-Y-P-P-Q; the sequence is QGYPPQSNSP…GYPPQQGYPP (125 aa). Residues 16 to 130 are compositionally biased toward low complexity; the sequence is PQPGQYGAPQ…QGYPPQQGYP (115 aa). 4 Annexin repeats span residues 161 to 232, 233 to 304, 315 to 388, and 392 to 462; these read HDCK…ALLT, EPAH…KLTE, MQVS…AIVT, and NPYG…DIIS.

It belongs to the annexin family.

Calcium/phospholipid-binding protein which promotes membrane fusion and is involved in exocytosis. This Dictyostelium discoideum (Social amoeba) protein is Annexin A7 (nxnA).